We begin with the raw amino-acid sequence, 508 residues long: Histidine ammonia-lyase (508 aa).

The 5-imidazolinone (Ala-Gly) cross-link spans Ala-143–Gly-145. Ser-144 is modified (2,3-didehydroalanine (Ser)).

Belongs to the PAL/histidase family. Post-translationally, contains an active site 4-methylidene-imidazol-5-one (MIO), which is formed autocatalytically by cyclization and dehydration of residues Ala-Ser-Gly.

It is found in the cytoplasm. It carries out the reaction L-histidine = trans-urocanate + NH4(+). It functions in the pathway amino-acid degradation; L-histidine degradation into L-glutamate; N-formimidoyl-L-glutamate from L-histidine: step 1/3. This is Histidine ammonia-lyase from Anaeromyxobacter dehalogenans (strain 2CP-C).